A 96-amino-acid polypeptide reads, in one-letter code: Large ribosomal subunit protein uL23 (96 aa).

This sequence belongs to the universal ribosomal protein uL23 family. In terms of assembly, part of the 50S ribosomal subunit. Contacts protein L29, and trigger factor when it is bound to the ribosome.

Functionally, one of the early assembly proteins it binds 23S rRNA. One of the proteins that surrounds the polypeptide exit tunnel on the outside of the ribosome. Forms the main docking site for trigger factor binding to the ribosome. In Onion yellows phytoplasma (strain OY-M), this protein is Large ribosomal subunit protein uL23.